The sequence spans 213 residues: Motile sperm domain-containing protein 1 (213 aa).

An MSP domain is found at Pro16–Phe143. 2 helical membrane-spanning segments follow: residues Ser159–Gly179 and Leu191–Leu211. Positions Leu205–Met208 match the Nuclear export signal motif.

As to expression, widely expressed. Shows highest expression in ribs, and slightly lower levels of expression in heart, kidney, muscle, thymus, calvariae and lung. Also detected at low levels in spleen and liver.

It is found in the endoplasmic reticulum membrane. The protein resides in the golgi apparatus membrane. Functionally, plays a role in differentiation and/or proliferation of mesenchymal stem cells. Proposed to be involved in epithelial-to-mesenchymal transition (EMT). However, another study suggests that it is not required for EMT or stem cell self-renewal and acts during later stages of differentiation. This Mus musculus (Mouse) protein is Motile sperm domain-containing protein 1 (Mospd1).